Here is a 213-residue protein sequence, read N- to C-terminus: Calcium-dependent cell adhesion molecule 1 (213 aa).

Repeat copies occupy residues 1-48 (MSVD…LVGS), 49-97 (NVRC…GAFQ), 98-146 (WAVD…LTPP), and 147-194 (DSEI…FPKN). The interval 1 to 194 (MSVDANKVKF…IKKDETFPKN (194 aa)) is 4 X approximate tandem repeats.

Belongs to the Dictyostelium CAD family. The N-terminus is blocked.

It localises to the cell membrane. Its function is as follows. Mediates calcium-dependent cell-cell adhesion during the early stage of development. In Dictyostelium discoideum (Social amoeba), this protein is Calcium-dependent cell adhesion molecule 1 (cadA).